The chain runs to 359 residues: Putative nucleotidyltransferase MAB21L1 (359 aa).

Residues 23–24 and 63–66 each bind a ribonucleoside 5'-triphosphate; these read RK and FEGL. Mg(2+)-binding residues include Glu-73 and Glu-75. A ribonucleoside 5'-triphosphate contacts are provided by residues Lys-248 and 252-255; that span reads SLLK.

This sequence belongs to the mab-21 family. In terms of assembly, monomer. Homodecamer; composed of 2 back to back homopentamers. The protein may exist as monomer in solution and oiligomerizes upon ligand binding.

The protein localises to the nucleus. Functionally, putative nucleotidyltransferase required for several aspects of embryonic development including normal development of the eye. It is unclear whether it displays nucleotidyltransferase activity in vivo. Binds single-stranded RNA (ssRNA). This chain is Putative nucleotidyltransferase MAB21L1 (mab21l1), found in Danio rerio (Zebrafish).